Here is a 246-residue protein sequence, read N- to C-terminus: Probable transcriptional regulatory protein Pden_1905 (246 aa).

The interval 1 to 21 is disordered; it reads MAGHSKWANIQHRKGKQDKLR.

This sequence belongs to the TACO1 family.

Its subcellular location is the cytoplasm. The sequence is that of Probable transcriptional regulatory protein Pden_1905 from Paracoccus denitrificans (strain Pd 1222).